A 62-amino-acid polypeptide reads, in one-letter code: uncharacterized protein (62 aa).

This is an uncharacterized protein from Dictyostelium discoideum (Social amoeba).